We begin with the raw amino-acid sequence, 306 residues long: UDP-N-acetylenolpyruvoylglucosamine reductase (306 aa).

An FAD-binding PCMH-type domain is found at 34-199 (KSGGAAEWLF…VAATFRGHAE (166 aa)). The active site involves Arg-179. Positions 215-234 (REASQPLRSRTGGSTFKNPQ) are disordered. Over residues 220–232 (PLRSRTGGSTFKN) the composition is skewed to polar residues. The active-site Proton donor is Ser-228. Glu-298 is a catalytic residue.

Belongs to the MurB family. FAD serves as cofactor.

Its subcellular location is the cytoplasm. It catalyses the reaction UDP-N-acetyl-alpha-D-muramate + NADP(+) = UDP-N-acetyl-3-O-(1-carboxyvinyl)-alpha-D-glucosamine + NADPH + H(+). The protein operates within cell wall biogenesis; peptidoglycan biosynthesis. In terms of biological role, cell wall formation. The sequence is that of UDP-N-acetylenolpyruvoylglucosamine reductase from Rhizorhabdus wittichii (strain DSM 6014 / CCUG 31198 / JCM 15750 / NBRC 105917 / EY 4224 / RW1) (Sphingomonas wittichii).